Reading from the N-terminus, the 261-residue chain is MRVALGIEYDGSSYCGWQRQVEVDSVQAQLEKALSLIANEPIEVVCAGRTDAGVHGTGQVVHFDTTVIRPDSAWTLGVNANLPDTIAVRWVKLVDDSFHARFSATARRYRYVIYNHKFRPGLLRHGLSHYHGDIDETLMHQAAQQLLGEHDFTSFRAMQCQSKSPFRSVHEVNVTRQGMYIMVDIKANAFLHHMVRNIVGSLLEIGLGNQPLNWISKLIAVKDRRQAAATAKPNGLYLVDVTYPEEFAIPKLALGPLFMLD.

Residue Asp51 is the Nucleophile of the active site. Residue Tyr109 participates in substrate binding.

This sequence belongs to the tRNA pseudouridine synthase TruA family. Homodimer.

The catalysed reaction is uridine(38/39/40) in tRNA = pseudouridine(38/39/40) in tRNA. Functionally, formation of pseudouridine at positions 38, 39 and 40 in the anticodon stem and loop of transfer RNAs. The sequence is that of tRNA pseudouridine synthase A from Shewanella denitrificans (strain OS217 / ATCC BAA-1090 / DSM 15013).